Consider the following 719-residue polypeptide: DNA ligase (719 aa).

NAD(+)-binding positions include 42–46 (DAEYD), 91–92 (SL), and E125. Residue K127 is the N6-AMP-lysine intermediate of the active site. R148, E184, K300, and K324 together coordinate NAD(+). Positions 429, 432, 447, and 453 each coordinate Zn(2+). Residues 638–719 (TASSPIAEKI…WMRLIKGHNI (82 aa)) form the BRCT domain.

The protein belongs to the NAD-dependent DNA ligase family. LigA subfamily. Requires Mg(2+) as cofactor. Mn(2+) serves as cofactor.

The catalysed reaction is NAD(+) + (deoxyribonucleotide)n-3'-hydroxyl + 5'-phospho-(deoxyribonucleotide)m = (deoxyribonucleotide)n+m + AMP + beta-nicotinamide D-nucleotide.. Functionally, DNA ligase that catalyzes the formation of phosphodiester linkages between 5'-phosphoryl and 3'-hydroxyl groups in double-stranded DNA using NAD as a coenzyme and as the energy source for the reaction. It is essential for DNA replication and repair of damaged DNA. This is DNA ligase from Bartonella tribocorum (strain CIP 105476 / IBS 506).